Reading from the N-terminus, the 365-residue chain is Heme A synthase (365 aa).

Transmembrane regions (helical) follow at residues 23-43 (LLRIWLRVVLFTLFCLVLVGG), 109-129 (LLARTIGLVFALPLAFFWLTG), 137-157 (LPLVGLLALGGFQGFVGWWMV), 172-192 (LATHLTIACLIFAGCMWILRG), and 208-228 (GFAALLTVLCLFQIYLGALVA). Residue His272 participates in heme binding. 3 helical membrane passes run 274–294 (LGAYTLFAATLWHMVSMARAL), 303–323 (AVLFFVLISVQAGLGITTLLM), and 327–347 (IHVALAHQGMALILLGFSVAH). His333 contacts heme.

Belongs to the COX15/CtaA family. Type 2 subfamily. Interacts with CtaB. Requires heme b as cofactor.

It localises to the cell membrane. It carries out the reaction Fe(II)-heme o + 2 A + H2O = Fe(II)-heme a + 2 AH2. It functions in the pathway porphyrin-containing compound metabolism; heme A biosynthesis; heme A from heme O: step 1/1. In terms of biological role, catalyzes the conversion of heme O to heme A by two successive hydroxylations of the methyl group at C8. The first hydroxylation forms heme I, the second hydroxylation results in an unstable dihydroxymethyl group, which spontaneously dehydrates, resulting in the formyl group of heme A. The sequence is that of Heme A synthase from Agrobacterium fabrum (strain C58 / ATCC 33970) (Agrobacterium tumefaciens (strain C58)).